The following is a 60-amino-acid chain: Large ribosomal subunit protein uL30 (60 aa).

This sequence belongs to the universal ribosomal protein uL30 family. Part of the 50S ribosomal subunit.

This chain is Large ribosomal subunit protein uL30, found in Lachnoclostridium phytofermentans (strain ATCC 700394 / DSM 18823 / ISDg) (Clostridium phytofermentans).